Reading from the N-terminus, the 357-residue chain is MLDLYVIKEGKRLRCGYTTGSCAAAAAKAAAIMLETGKVLQFVEIDTPANIPLKLEVHNPSIDPEKASCAIVKDAGDDPDNTDGIEIYAEVRKRQDGQVHIHGGTGIGRIVRKGLFGTVGQAAINPVPLQMIEKEIRAVSDKGYDVTIYAPQGEVIAKKTFNANIGIEGGISIIGTKGIVYPMSEEALIKTIYMEMDMVEQKHGLSNIILVPGNYGEKISDTLGLSEARVKISNYIGDSLLYAYNKGFQSMTLIGHIGKFSKLSIGVFNTHSKVCDGRMEAFIYYLALMGAPRQLIEEVNGAVTAEEGLHICIDAGYGEVIKKMEQGAEQKIRKYIKDENYPVKVIIYSMERGVHMG.

It belongs to the CbiD family.

The enzyme catalyses Co-precorrin-5B + S-adenosyl-L-methionine = Co-precorrin-6A + S-adenosyl-L-homocysteine. It participates in cofactor biosynthesis; adenosylcobalamin biosynthesis; cob(II)yrinate a,c-diamide from sirohydrochlorin (anaerobic route): step 6/10. Its function is as follows. Catalyzes the methylation of C-1 in cobalt-precorrin-5B to form cobalt-precorrin-6A. This is Cobalt-precorrin-5B C(1)-methyltransferase from Alkaliphilus oremlandii (strain OhILAs) (Clostridium oremlandii (strain OhILAs)).